Here is a 226-residue protein sequence, read N- to C-terminus: Glutathione peroxidase 3 (226 aa).

The signal sequence occupies residues 1 to 24 (MARLLQASCLLSLLLAGFLPQSRG). The active site involves selenocysteine 73. Residue selenocysteine 73 is a non-standard amino acid, selenocysteine.

This sequence belongs to the glutathione peroxidase family. As to quaternary structure, homotetramer. In terms of tissue distribution, secreted in plasma.

It is found in the secreted. The enzyme catalyses 2 glutathione + H2O2 = glutathione disulfide + 2 H2O. It carries out the reaction tert-butyl hydroperoxide + 2 glutathione = tert-butanol + glutathione disulfide + H2O. Protects cells and enzymes from oxidative damage, by catalyzing the reduction of hydrogen peroxide, lipid peroxides and organic hydroperoxide, by glutathione. The sequence is that of Glutathione peroxidase 3 from Sapajus apella (Brown-capped capuchin).